Here is an 880-residue protein sequence, read N- to C-terminus: DNA double-strand break repair Rad50 ATPase (880 aa).

ATP contacts are provided by residues Arg12, 32 to 38, and Gln138; that span reads NGSGKSS. Coiled coils occupy residues 225 to 336 and 391 to 744; these read GELE…VIKE and GEVI…QALN. One can recognise a Zinc-hook domain in the interval 397 to 494; the sequence is LESLEKERTE…NLRKLEIKLR (98 aa). Positions 442 and 445 each coordinate Zn(2+). ATP is bound at residue 789 to 794; that stretch reads FLSGGE.

This sequence belongs to the SMC family. RAD50 subfamily. Homodimer. Forms a heterotetramer composed of two Mre11 subunits and two Rad50 subunits. Zn(2+) is required as a cofactor.

In terms of biological role, part of the Rad50/Mre11 complex, which is involved in the early steps of DNA double-strand break (DSB) repair. The complex may facilitate opening of the processed DNA ends to aid in the recruitment of HerA and NurA. Rad50 controls the balance between DNA end bridging and DNA resection via ATP-dependent structural rearrangements of the Rad50/Mre11 complex. In Pyrococcus abyssi (strain GE5 / Orsay), this protein is DNA double-strand break repair Rad50 ATPase.